Here is a 501-residue protein sequence, read N- to C-terminus: Glycerol kinase (501 aa).

T16 provides a ligand contact to ADP. ATP is bound by residues T16, T17, and S18. T16 is a binding site for sn-glycerol 3-phosphate. Position 20 (R20) interacts with ADP. Sn-glycerol 3-phosphate is bound by residues R84, E85, Y135, and D242. Glycerol is bound by residues R84, E85, Y135, D242, and Q243. 2 residues coordinate ADP: T264 and G307. The ATP site is built by T264, G307, Q311, and G408. Residue G408 coordinates ADP.

This sequence belongs to the FGGY kinase family.

The enzyme catalyses glycerol + ATP = sn-glycerol 3-phosphate + ADP + H(+). The protein operates within polyol metabolism; glycerol degradation via glycerol kinase pathway; sn-glycerol 3-phosphate from glycerol: step 1/1. Its function is as follows. Key enzyme in the regulation of glycerol uptake and metabolism. Catalyzes the phosphorylation of glycerol to yield sn-glycerol 3-phosphate. The protein is Glycerol kinase of Saccharolobus islandicus (strain M.14.25 / Kamchatka #1) (Sulfolobus islandicus).